A 145-amino-acid polypeptide reads, in one-letter code: 3-dehydroquinate dehydratase (145 aa).

Tyr-23 functions as the Proton acceptor in the catalytic mechanism. Positions 73, 79, and 86 each coordinate substrate. Catalysis depends on His-99, which acts as the Proton donor. Substrate-binding positions include 100–101 (LS) and Arg-110.

Belongs to the type-II 3-dehydroquinase family. As to quaternary structure, homododecamer.

The enzyme catalyses 3-dehydroquinate = 3-dehydroshikimate + H2O. It participates in metabolic intermediate biosynthesis; chorismate biosynthesis; chorismate from D-erythrose 4-phosphate and phosphoenolpyruvate: step 3/7. In terms of biological role, catalyzes a trans-dehydration via an enolate intermediate. This Desulfitobacterium hafniense (strain DSM 10664 / DCB-2) protein is 3-dehydroquinate dehydratase.